The sequence spans 493 residues: Transcription termination factor MTERF5, chloroplastic (493 aa).

The N-terminal 43 residues, 1-43 (MQSLSQLGPSEIFLVARREKPSTRAQLWFTGRLSFRQETNGIR), are a transit peptide targeting the chloroplast.

It belongs to the mTERF family. Interacts with pTAC6. As to expression, expressed in roots, rosette leaves, cauline leaves, stems, flower buds and open flowers.

It localises to the plastid. The protein resides in the chloroplast. Its function is as follows. Transcription termination factor required for processing and steady-state levels of plastid transcripts. Involved also in chloroplast transcriptional pausing, a general feature of chloroplast genes. Specifically and positively regulates the transcription of chloroplast psbEFLJ encoding for photosystem II (PSII) core subunits psbE, psbF, psbL and psbJ; causes the plastid-encoded RNA polymerase (PEP) complex to pause at psbEFLJ by binding to the +30 to +51 region of double-stranded DNA, and recruits additional pTAC6 to the transcriptionally paused region of psbEFLJ. May play a role in response to abiotic stresses. This is Transcription termination factor MTERF5, chloroplastic from Arabidopsis thaliana (Mouse-ear cress).